Consider the following 257-residue polypeptide: MRDVQSEKDHRNIPINMVGIKGLKYPIIVMDRTNKRQHTIGTFNLFVDLPKDFRGTHMSRFVEVLDRHNMKVTPKNMESILDDMREALKATVAHVTVDFPYFIRKNAPISGIGSYSSYNCGFISTKNKEFDFILKVEVPVLTVCPCSKEISDRGAHNQRAMVNVQVRMNSLVWIEEIIEMVEDAASAPIFTLLKREDEKFITEVSYDNPRFVEDVSREVVLRFMNDPRISWYRVEVSSQESIHNHEAYACIEKGKSL.

This sequence belongs to the GTP cyclohydrolase IV family.

It catalyses the reaction GTP + H2O = 7,8-dihydroneopterin 3'-triphosphate + formate + H(+). It functions in the pathway cofactor biosynthesis; 7,8-dihydroneopterin triphosphate biosynthesis; 7,8-dihydroneopterin triphosphate from GTP: step 1/1. Its function is as follows. Converts GTP to 7,8-dihydroneopterin triphosphate. The polypeptide is GTP cyclohydrolase FolE2 (Kosmotoga olearia (strain ATCC BAA-1733 / DSM 21960 / TBF 19.5.1)).